Consider the following 458-residue polypeptide: UDP-N-acetylmuramate--L-alanine ligase (458 aa).

Glycine 118–threonine 124 contributes to the ATP binding site.

The protein belongs to the MurCDEF family.

The protein resides in the cytoplasm. It carries out the reaction UDP-N-acetyl-alpha-D-muramate + L-alanine + ATP = UDP-N-acetyl-alpha-D-muramoyl-L-alanine + ADP + phosphate + H(+). Its pathway is cell wall biogenesis; peptidoglycan biosynthesis. Its function is as follows. Cell wall formation. In Clostridium botulinum (strain Langeland / NCTC 10281 / Type F), this protein is UDP-N-acetylmuramate--L-alanine ligase.